We begin with the raw amino-acid sequence, 246 residues long: Granzyme H (246 aa).

Positions methionine 1–threonine 18 are cleaved as a signal peptide. A propeptide spans glutamate 19–glutamate 20 (activation peptide). The 224-residue stretch at isoleucine 21 to lysine 244 folds into the Peptidase S1 domain. Residues arginine 46 to arginine 48 form a mediates the preference for acidic residues at the P3' and P4' sites region. Cysteine 49 and cysteine 65 are joined by a disulfide. Histidine 64 functions as the Charge relay system in the catalytic mechanism. N-linked (GlcNAc...) asparagine glycans are attached at residues asparagine 71 and asparagine 104. The active-site Charge relay system is aspartate 108. Intrachain disulfides connect cysteine 142-cysteine 208 and cysteine 172-cysteine 187. Asparagine 179 is a glycosylation site (N-linked (GlcNAc...) asparagine). Catalysis depends on serine 202, which acts as the Charge relay system.

The protein belongs to the peptidase S1 family. Granzyme subfamily. Constitutively expressed in NK cells.

It is found in the cytolytic granule. With respect to regulation, inhibited by SERPINB1. Its function is as follows. Cytotoxic chymotrypsin-like serine protease with preference for bulky and aromatic residues at the P1 position and acidic residues at the P3' and P4' sites. Probably necessary for target cell lysis in cell-mediated immune responses. Participates in the antiviral response via direct cleavage of several proteins essential for viral replication. The protein is Granzyme H (GZMH) of Homo sapiens (Human).